The primary structure comprises 254 residues: Acetylglutamate kinase (254 aa).

Substrate contacts are provided by residues 40 to 41 (GG), Arg62, and Asn154.

The protein belongs to the acetylglutamate kinase family. ArgB subfamily.

The protein localises to the cytoplasm. It carries out the reaction N-acetyl-L-glutamate + ATP = N-acetyl-L-glutamyl 5-phosphate + ADP. It functions in the pathway amino-acid biosynthesis; L-arginine biosynthesis; N(2)-acetyl-L-ornithine from L-glutamate: step 2/4. Functionally, catalyzes the ATP-dependent phosphorylation of N-acetyl-L-glutamate. The protein is Acetylglutamate kinase of Staphylococcus aureus (strain Mu3 / ATCC 700698).